A 166-amino-acid chain; its full sequence is Urease accessory protein UreE 2 (166 aa).

Residues 133–156 (QPEHGAYGGGHHHSRAGEEDFNYP) form a disordered region.

This sequence belongs to the UreE family.

It is found in the cytoplasm. In terms of biological role, involved in urease metallocenter assembly. Binds nickel. Probably functions as a nickel donor during metallocenter assembly. The protein is Urease accessory protein UreE 2 of Pseudomonas syringae pv. tomato (strain ATCC BAA-871 / DC3000).